Consider the following 223-residue polypeptide: MDELKKLAGVTAAKYVKNGMIVGLGTGSTAYFFVEEIGRRVKEEGLQVVGVTTSNRTTEQARGLGIPLKSADDIDVIDVTVDGADEVDPDFNGIKGGGGALLMEKIVATPTKEYIWVVDESKLVETLGAFKLPVEVVRYGSERLFRVFKSKGYCPSFRETEGDRFITDMGNYIIDLDLKKIEDPKQLANELDHTVGVVEHGLFNSMVNKVIVAGKNGLDILEK.

Residues threonine 26–threonine 29, aspartate 82–aspartate 85, and lysine 95–glycine 98 contribute to the substrate site. Glutamate 104 (proton acceptor) is an active-site residue. Lysine 122 contributes to the substrate binding site.

This sequence belongs to the ribose 5-phosphate isomerase family. In terms of assembly, homodimer.

It catalyses the reaction aldehydo-D-ribose 5-phosphate = D-ribulose 5-phosphate. It functions in the pathway carbohydrate degradation; pentose phosphate pathway; D-ribose 5-phosphate from D-ribulose 5-phosphate (non-oxidative stage): step 1/1. Catalyzes the reversible conversion of ribose-5-phosphate to ribulose 5-phosphate. The polypeptide is Ribose-5-phosphate isomerase A (Streptococcus agalactiae serotype III (strain NEM316)).